The chain runs to 89 residues: Large ribosomal subunit protein bL27 (89 aa).

Residues 1–22 form a disordered region; that stretch reads MAHKKAGGSSRNGRDSESKRLG.

This sequence belongs to the bacterial ribosomal protein bL27 family.

The sequence is that of Large ribosomal subunit protein bL27 from Bartonella henselae (strain ATCC 49882 / DSM 28221 / CCUG 30454 / Houston 1) (Rochalimaea henselae).